The sequence spans 152 residues: Small ribosomal subunit protein uS15 (152 aa).

A compositionally biased stretch (basic residues) spans 1 to 16 (MARIHARRRGKSGSKR). The segment at 1–21 (MARIHARRRGKSGSKRIYRDS) is disordered.

This sequence belongs to the universal ribosomal protein uS15 family. In terms of assembly, part of the 30S ribosomal subunit.

The polypeptide is Small ribosomal subunit protein uS15 (Archaeoglobus fulgidus (strain ATCC 49558 / DSM 4304 / JCM 9628 / NBRC 100126 / VC-16)).